Here is a 361-residue protein sequence, read N- to C-terminus: tRNA/tmRNA (uracil-C(5))-methyltransferase (361 aa).

Positions 185, 213, 218, 234, and 294 each coordinate S-adenosyl-L-methionine. The active-site Nucleophile is Cys319. Glu353 serves as the catalytic Proton acceptor.

Belongs to the class I-like SAM-binding methyltransferase superfamily. RNA M5U methyltransferase family. TrmA subfamily.

The enzyme catalyses uridine(54) in tRNA + S-adenosyl-L-methionine = 5-methyluridine(54) in tRNA + S-adenosyl-L-homocysteine + H(+). It catalyses the reaction uridine(341) in tmRNA + S-adenosyl-L-methionine = 5-methyluridine(341) in tmRNA + S-adenosyl-L-homocysteine + H(+). In terms of biological role, dual-specificity methyltransferase that catalyzes the formation of 5-methyluridine at position 54 (m5U54) in all tRNAs, and that of position 341 (m5U341) in tmRNA (transfer-mRNA). The sequence is that of tRNA/tmRNA (uracil-C(5))-methyltransferase from Pseudomonas entomophila (strain L48).